Consider the following 128-residue polypeptide: Small ribosomal subunit protein eS8 (128 aa).

The interval 1–31 is disordered; that stretch reads MAWYQGNDLRKPTGGKKTRHRKKRKHELGRP. The segment covering 13–27 has biased composition (basic residues); sequence TGGKKTRHRKKRKHE.

It belongs to the eukaryotic ribosomal protein eS8 family. In terms of assembly, part of the 30S ribosomal subunit.

The polypeptide is Small ribosomal subunit protein eS8 (Staphylothermus marinus (strain ATCC 43588 / DSM 3639 / JCM 9404 / F1)).